Consider the following 975-residue polypeptide: Translation initiation factor IF-2 (975 aa).

2 disordered regions span residues 49-110 and 193-339; these read KLSG…APKA and AAAP…GRGA. A compositionally biased stretch (basic residues) spans 63–72; it reads KKTAARKAAP. 3 stretches are compositionally biased toward low complexity: residues 73–94, 193–202, and 209–225; these read KKAAVAAPVPEADASSAAAKTP, AAAPEAPAPQ, and VVGTSGVSSSATPASAP. Basic and acidic residues predominate over residues 308 to 318; it reads GADRGGRDFDK. Over residues 324–336 the composition is skewed to low complexity; that stretch reads GPSAPAAGPAAAG. The tr-type G domain maps to 469–639; that stretch reads TRPPVVTVMG…KLVAEVAELK (171 aa). The tract at residues 478 to 485 is G1; the sequence is GHVDHGKT. Residue 478-485 coordinates GTP; that stretch reads GHVDHGKT. The G2 stretch occupies residues 503–507; that stretch reads GITQH. The interval 525 to 528 is G3; the sequence is DTPG. Residues 525–529 and 579–582 contribute to the GTP site; these read DTPGH and NKID. Residues 579–582 are G4; the sequence is NKID. The tract at residues 615-617 is G5; the sequence is SAL.

This sequence belongs to the TRAFAC class translation factor GTPase superfamily. Classic translation factor GTPase family. IF-2 subfamily.

The protein localises to the cytoplasm. Functionally, one of the essential components for the initiation of protein synthesis. Protects formylmethionyl-tRNA from spontaneous hydrolysis and promotes its binding to the 30S ribosomal subunits. Also involved in the hydrolysis of GTP during the formation of the 70S ribosomal complex. The chain is Translation initiation factor IF-2 from Bdellovibrio bacteriovorus (strain ATCC 15356 / DSM 50701 / NCIMB 9529 / HD100).